A 465-amino-acid polypeptide reads, in one-letter code: uncharacterized protein (465 aa).

The segment covering 87 to 112 (KTSQQIDSSPPQTPTTSNGSMMTRRQ) has biased composition (polar residues). Disordered stretches follow at residues 87–169 (KTSQ…SYDD) and 201–244 (EGYI…NNIF). A compositionally biased stretch (low complexity) spans 113–139 (NANNAISSNNNTNTNVTNGSSSNTSLN). The span at 141–157 (GDEEQEEEEEEENDEDS) shows a compositional bias: acidic residues. Residues 217 to 244 (NRNNNNNNINKNNNNNINNNNNNNNNIF) show a composition bias toward low complexity.

This is an uncharacterized protein from Dictyostelium discoideum (Social amoeba).